A 986-amino-acid chain; its full sequence is Translation initiation factor IF-2 (986 aa).

The interval 47–388 (SAPAQTPHKE…RSKGRKGKYE (342 aa)) is disordered. The segment covering 53–64 (PHKEVSQEEVRV) has biased composition (basic and acidic residues). The span at 78-94 (PEAASAEAASAPAAQEE) shows a compositional bias: low complexity. Residues 95-113 (APQKAEPEKVEAEKAEAPK) show a composition bias toward basic and acidic residues. Composition is skewed to low complexity over residues 127-141 (EAAP…PAEA) and 153-214 (APVA…QAPA). Basic and acidic residues-rich tracts occupy residues 215 to 225 (KAEEQEPEKAT) and 268 to 278 (GVERPGTERPA). Residues 286 to 300 (PAGAPGRPGERPTTG) show a composition bias toward low complexity. Residues 358–374 (GKKDSFKDILDKRERVF) are compositionally biased toward basic and acidic residues. Positions 486 to 653 (KRPPVVTIMG…MVLLQADVLE (168 aa)) constitute a tr-type G domain. Positions 495–502 (GHVDHGKT) are G1. 495–502 (GHVDHGKT) contributes to the GTP binding site. A G2 region spans residues 520-524 (GITQH). Residues 541–544 (DTPG) form a G3 region. Residues 541 to 545 (DTPGH) and 595 to 598 (NKID) contribute to the GTP site. The G4 stretch occupies residues 595-598 (NKID). The interval 631–633 (SAK) is G5.

This sequence belongs to the TRAFAC class translation factor GTPase superfamily. Classic translation factor GTPase family. IF-2 subfamily.

Its subcellular location is the cytoplasm. Functionally, one of the essential components for the initiation of protein synthesis. Protects formylmethionyl-tRNA from spontaneous hydrolysis and promotes its binding to the 30S ribosomal subunits. Also involved in the hydrolysis of GTP during the formation of the 70S ribosomal complex. In Citrifermentans bemidjiense (strain ATCC BAA-1014 / DSM 16622 / JCM 12645 / Bem) (Geobacter bemidjiensis), this protein is Translation initiation factor IF-2.